The primary structure comprises 305 residues: Aurasperone B biosynthesis cluster protein A (305 aa).

Positions 1 to 26 are cleaved as a signal peptide; it reads MSIFFSIRFWPAAISAAILWLPQVLG. Residues asparagine 29, asparagine 34, asparagine 64, asparagine 83, asparagine 132, asparagine 183, asparagine 218, and asparagine 288 are each glycosylated (N-linked (GlcNAc...) asparagine).

This sequence belongs to the bfoA family.

Functionally, part of the gene cluster that mediates the biosynthesis of aurasperone B, a dimeric gamma-naphthopyrone. The first step in the biosynthesis of aurasperone B is the production of gamma-naphthopyrone precursor YWA1 by the non-reducing polyketide synthase albA, via condensation of one acetyl-CoA starter unit with 6 malonyl-CoA units. YWA1 is then methylated by aunE at position C-6 to yield foncesin which is further methylated at position C-8 by aunD to produce fonsecin B. A key enzyme in the biosynthetic pathway is the cytochrome P450 monooxygenase aunB which catalyzes the oxidative dimerization of fonsecin B to aurasperone B. AunB also catalyzes the oxidative dimerization of rubrofusarin B into aurasperone A. In Aspergillus niger (strain ATCC MYA-4892 / CBS 513.88 / FGSC A1513), this protein is Aurasperone B biosynthesis cluster protein A.